A 743-amino-acid chain; its full sequence is MEASGSASWARVSKNLIERRAVKGCLLPTPSDVMDAAVMALKDATENVVSKHLFSVDRTNALSVIHTNAVPESIITTAILRDTNGEYRREYEDSAKCNLAATDLSQDGMWEVVIKSYWRYLRESSGAEVVDRGGVGNTTQSVLSVLILQSTFGKKRLSKNPFKHKGPNVSYKSNLENLRAAFTKIEKYMYYMRPNDPMTKSEDTELRLHELLAYVATCYRWLLWFMDLTDAKVLKNIDKGPVITHGPRETRPPDELVRRHLKSGPAISAGTGDALTLSTATADALIVLLRMSVSWTSHSWKSNTHGVTGAIVAAVELVTLIHHHLQYIINTIFAGYVCWLDGGVENSYLNSALRNQGRFDHFAGKLVPIMATLSWANMEKGTVMWFKYALAKSIVCHGSPTQHYLTVLDSIASKRTGAGLPPGATFGRTANFQGQFGCPPQGPLPAPPNSKTKSMFKRPGRGSVRSLKQLPASTPNMVSSATTYNAGGNTAATSGQGEEAIQIHASGELNDCIWYLNGTYSHQRSDSSSSDNSSCSSTETEYITISSTPSPTREVVYTDPLLGSDEEKDASPQPANTVSEYSSPANSGYMRPRSTLAEEIWQLRDSDYTPYMRPSRAGRPRLRLEDQTLQTLPGCKPPANSPEDNFEDTLFSSSQIYSDNAHSTFRPRARCVDDEYGLTALAALSASQAKARRVRLGTTTPTSANEATEKYTTPSSGGCIRRTLSTSESPESSPEQQERVSSL.

3 disordered regions span residues 437-481 (GCPP…VSSA), 522-590 (HQRS…SGYM), and 693-743 (RVRL…VSSL). Positions 526–552 (DSSSSDNSSCSSTETEYITISSTPSPT) are enriched in low complexity. Polar residues-rich tracts occupy residues 573-586 (QPANTVSEYSSPAN) and 697-716 (GTTTPTSANEATEKYTTPSS). Over residues 722–743 (RTLSTSESPESSPEQQERVSSL) the composition is skewed to low complexity.

This sequence belongs to the herpesviridae HHV-1 VP11/12 protein family. As to quaternary structure, interacts with VP16.

The protein resides in the virion tegument. The protein localises to the host cell membrane. Abundant tegument protein. Trans-activates the immediate early genes. In Equus caballus (Horse), this protein is Tegument protein UL46 homolog.